The primary structure comprises 596 residues: Sensor protein ChvG (596 aa).

Residues 1–22 (MLKKTPETVSDSDDAEERGSER) are disordered. At 1 to 47 (MLKKTPETVSDSDDAEERGSERRHRIHPLTIIRRIFGNAVFSSLTRR) the chain is on the cytoplasmic side. A helical membrane pass occupies residues 48-68 (ILFFNVAATVVLVGGILYLNQ). Residues 69–283 (FREGLIDARV…VHAERLAIMR (215 aa)) lie on the Periplasmic side of the membrane. Residues 284–304 (VFGIATLVNIVLSLLLSSTIA) form a helical membrane-spanning segment. The 56-residue stretch at 301 to 356 (STIATPLRRLSAAAIRVRRGARTREEIPDFSARQDEIGNLSIALREMTTALYDRID) folds into the HAMP domain. Residues 305–596 (TPLRRLSAAA…SLPAAETHER (292 aa)) lie on the Cytoplasmic side of the membrane. In terms of domain architecture, Histidine kinase spans 364-592 (DVSHELKNPL…RFTLSLPAAE (229 aa)). His367 carries the post-translational modification Phosphohistidine.

The protein resides in the cell inner membrane. It catalyses the reaction ATP + protein L-histidine = ADP + protein N-phospho-L-histidine.. Its function is as follows. Member of a two-component regulatory system ChvG/ChvI. Activates ChvI by phosphorylation (Potential). This is Sensor protein ChvG (chvG) from Agrobacterium fabrum (strain C58 / ATCC 33970) (Agrobacterium tumefaciens (strain C58)).